The sequence spans 497 residues: Glycerol kinase (497 aa).

Thr-13 lines the ADP pocket. ATP is bound by residues Thr-13, Thr-14, and Ser-15. Thr-13 lines the sn-glycerol 3-phosphate pocket. Arg-17 lines the ADP pocket. Positions 83, 84, and 135 each coordinate sn-glycerol 3-phosphate. 3 residues coordinate glycerol: Arg-83, Glu-84, and Tyr-135. His-231 is subject to Phosphohistidine; by HPr. Residue Asp-245 coordinates sn-glycerol 3-phosphate. Residues Asp-245 and Gln-246 each contribute to the glycerol site. Thr-267 and Gly-310 together coordinate ADP. Thr-267, Gly-310, Gln-314, and Gly-411 together coordinate ATP. The ADP site is built by Gly-411 and Asn-415.

The protein belongs to the FGGY kinase family. As to quaternary structure, homotetramer and homodimer (in equilibrium). Post-translationally, the phosphoenolpyruvate-dependent sugar phosphotransferase system (PTS), including enzyme I, and histidine-containing protein (HPr) are required for the phosphorylation, which leads to the activation of the enzyme.

The enzyme catalyses glycerol + ATP = sn-glycerol 3-phosphate + ADP + H(+). The protein operates within polyol metabolism; glycerol degradation via glycerol kinase pathway; sn-glycerol 3-phosphate from glycerol: step 1/1. Activated by phosphorylation and inhibited by fructose 1,6-bisphosphate (FBP). Functionally, key enzyme in the regulation of glycerol uptake and metabolism. Catalyzes the phosphorylation of glycerol to yield sn-glycerol 3-phosphate. This chain is Glycerol kinase, found in Halalkalibacterium halodurans (strain ATCC BAA-125 / DSM 18197 / FERM 7344 / JCM 9153 / C-125) (Bacillus halodurans).